Reading from the N-terminus, the 319-residue chain is Acetyl-coenzyme A carboxylase carboxyl transferase subunit alpha (319 aa).

Residues 35 to 296 (DLDKELEQLE…KATLLRQLAD (262 aa)) form the CoA carboxyltransferase C-terminal domain.

The protein belongs to the AccA family. As to quaternary structure, acetyl-CoA carboxylase is a heterohexamer composed of biotin carboxyl carrier protein (AccB), biotin carboxylase (AccC) and two subunits each of ACCase subunit alpha (AccA) and ACCase subunit beta (AccD).

The protein resides in the cytoplasm. It carries out the reaction N(6)-carboxybiotinyl-L-lysyl-[protein] + acetyl-CoA = N(6)-biotinyl-L-lysyl-[protein] + malonyl-CoA. The protein operates within lipid metabolism; malonyl-CoA biosynthesis; malonyl-CoA from acetyl-CoA: step 1/1. Component of the acetyl coenzyme A carboxylase (ACC) complex. First, biotin carboxylase catalyzes the carboxylation of biotin on its carrier protein (BCCP) and then the CO(2) group is transferred by the carboxyltransferase to acetyl-CoA to form malonyl-CoA. The chain is Acetyl-coenzyme A carboxylase carboxyl transferase subunit alpha from Vibrio cholerae serotype O1 (strain ATCC 39541 / Classical Ogawa 395 / O395).